Consider the following 1111-residue polypeptide: Isoleucine--tRNA ligase (1111 aa).

The 'HIGH' region motif lies at 52 to 62 (PFANGLPHYGH). A 'KMSKS' region motif is present at residues 645 to 649 (KLSKR). Lysine 648 is an ATP binding site.

Belongs to the class-I aminoacyl-tRNA synthetase family. IleS type 2 subfamily. As to quaternary structure, monomer. It depends on Zn(2+) as a cofactor.

The protein resides in the cytoplasm. The catalysed reaction is tRNA(Ile) + L-isoleucine + ATP = L-isoleucyl-tRNA(Ile) + AMP + diphosphate. In terms of biological role, catalyzes the attachment of isoleucine to tRNA(Ile). As IleRS can inadvertently accommodate and process structurally similar amino acids such as valine, to avoid such errors it has two additional distinct tRNA(Ile)-dependent editing activities. One activity is designated as 'pretransfer' editing and involves the hydrolysis of activated Val-AMP. The other activity is designated 'posttransfer' editing and involves deacylation of mischarged Val-tRNA(Ile). This is Isoleucine--tRNA ligase from Wolbachia pipientis wMel.